Consider the following 837-residue polypeptide: Striatin-interacting protein 1 (837 aa).

N-acetylmethionine is present on methionine 1. Residues methionine 1 to aspartate 67 are disordered. A compositionally biased stretch (pro residues) spans proline 18–alanine 35. A compositionally biased stretch (basic and acidic residues) spans lysine 47–glutamate 60. Phosphoserine occurs at positions 59, 335, and 339. Residues proline 336–proline 423 form a disordered region. The span at lysine 356–aspartate 377 shows a compositional bias: basic and acidic residues. Positions serine 378 to leucine 391 are enriched in acidic residues. Serine 788 bears the Phosphoserine mark. Residues aspartate 796–glutamine 837 form a required for STRIPAK core complex formation region.

It belongs to the STRIP family. In terms of assembly, part of the core of STRIPAK complexes composed of PP2A catalytic and scaffolding subunits, the striatins (PP2A regulatory subunits), the striatin-associated proteins MOB4, STRIP1 and STRIP2, PDCD10 and members of the STE20 kinases, such as STK24 and STK26. The STRIPAK complex can be extended by adapter proteins such as SLMAP:SIKE1, CTTNBP2 or CTTNBP2NL. Interacts with CDC42BPB. Interacts with CTTNBP2NL.

It is found in the cytoplasm. Plays a role in the regulation of cell morphology and cytoskeletal organization. Required in the cortical actin filament dynamics and cell shape. Part of the striatin-interacting phosphatase and kinase (STRIPAK) complexes. STRIPAK complexes have critical roles in protein (de)phosphorylation and are regulators of multiple signaling pathways including Hippo, MAPK, nuclear receptor and cytoskeleton remodeling. Different types of STRIPAK complexes are involved in a variety of biological processes such as cell growth, differentiation, apoptosis, metabolism and immune regulation. In Bos taurus (Bovine), this protein is Striatin-interacting protein 1 (STRIP1).